A 157-amino-acid chain; its full sequence is Hydra actinoporin-like toxin 3 (157 aa).

Positions 1–14 (LEATVSRNKKYKFT) are cleaved as a signal peptide. Positions 129–131 (IAG) match the Cell attachment site motif.

Belongs to the actinoporin family. HALT subfamily. In terms of assembly, octamer or nonamer in membranes. Monomer in the soluble state. In vitro, interacts with folate receptor alpha (of target organism).

The protein resides in the nematocyst. It is found in the secreted. It localises to the target cell membrane. Pore-forming protein that forms hydrophilic pores and causes cytolysis. Compared to equinatoxin-2 (AC P61914), it reveals lower cytolysis activity (5-12-fold difference, tested on erythrocytes), a larger pore size (probably 2-3 nm) and different affinity to membrane lipids (100-fold lower affinity to sphingomyelin). Binds to the two sphingolipids, lysophosphatidic acid (LPA) and sphingosine-1-phosphate (S1P). Does not bind (or only weakly) to sulfatides (SFT). Shows cytolytic activity on HeLa cells, with a different potency than its paralogs (from most potent to less potent: HALT-4&gt;HALT-6~HALT-1&gt;HALT-3&gt;HALT-7&gt;HALT-2). Pore formation is a multi-step process that involves specific recognition of membrane lipid by a protein aromatic residues rich region, firm binding to the membrane (mainly driven by hydrophobic interactions) accompanied by the transfer of the N-terminal region to the lipid-water interface and finally pore formation after oligomerization of monomers. In vitro, binds to the folate receptor alpha (FOLR1), a GPI-anchored membrane protein that plays a major role in the uptake of folate/folic acid into cells via endocytosis, suggesting a possible involvement of this receptor in the mechanism of HALT-1-induced cell lysis. In vivo, does not cause visible paralysis in larvae of the blowfly Sarcophaga faculata, the most common arthropod prey of Hydra. This is Hydra actinoporin-like toxin 3 from Hydra vulgaris (Hydra).